Reading from the N-terminus, the 161-residue chain is Cytochrome c-type biogenesis protein CcmE (161 aa).

At 1–8 (MNPRRKKR) the chain is on the cytoplasmic side. A helical; Signal-anchor for type II membrane protein membrane pass occupies residues 9–29 (LGLILALFVGISATVGLMLYA). The Periplasmic portion of the chain corresponds to 30 to 161 (LNQNMDLFYT…TEQQKQGTGQ (132 aa)). Histidine 129 and tyrosine 133 together coordinate heme. The tract at residues 142-161 (MKKTHEPLQYTEQQKQGTGQ) is disordered. The segment covering 151 to 161 (YTEQQKQGTGQ) has biased composition (polar residues).

It belongs to the CcmE/CycJ family.

The protein resides in the cell inner membrane. Its function is as follows. Heme chaperone required for the biogenesis of c-type cytochromes. Transiently binds heme delivered by CcmC and transfers the heme to apo-cytochromes in a process facilitated by CcmF and CcmH. The polypeptide is Cytochrome c-type biogenesis protein CcmE (Aliivibrio fischeri (strain ATCC 700601 / ES114) (Vibrio fischeri)).